The following is a 163-amino-acid chain: Shikimate kinase (163 aa).

10–15 (GVGKSS) contacts ATP. Mg(2+) is bound at residue Ser-14. 3 residues coordinate substrate: Asp-28, Arg-52, and Gly-75. Arg-116 is a binding site for ATP. Arg-134 contacts substrate. Arg-151 lines the ATP pocket.

This sequence belongs to the shikimate kinase family. As to quaternary structure, monomer. It depends on Mg(2+) as a cofactor.

It localises to the cytoplasm. The enzyme catalyses shikimate + ATP = 3-phosphoshikimate + ADP + H(+). The protein operates within metabolic intermediate biosynthesis; chorismate biosynthesis; chorismate from D-erythrose 4-phosphate and phosphoenolpyruvate: step 5/7. Its function is as follows. Catalyzes the specific phosphorylation of the 3-hydroxyl group of shikimic acid using ATP as a cosubstrate. The protein is Shikimate kinase of Streptococcus thermophilus (strain ATCC BAA-491 / LMD-9).